Reading from the N-terminus, the 268-residue chain is 4-hydroxy-tetrahydrodipicolinate reductase (268 aa).

Residues 10–15 (GASGRM), Asp-36, 99–101 (GTT), and 123–126 (APNM) contribute to the NAD(+) site. The active-site Proton donor/acceptor is the His-156. (S)-2,3,4,5-tetrahydrodipicolinate is bound at residue His-157. The Proton donor role is filled by Lys-160. 166–167 (GT) lines the (S)-2,3,4,5-tetrahydrodipicolinate pocket.

This sequence belongs to the DapB family.

Its subcellular location is the cytoplasm. It carries out the reaction (S)-2,3,4,5-tetrahydrodipicolinate + NAD(+) + H2O = (2S,4S)-4-hydroxy-2,3,4,5-tetrahydrodipicolinate + NADH + H(+). It catalyses the reaction (S)-2,3,4,5-tetrahydrodipicolinate + NADP(+) + H2O = (2S,4S)-4-hydroxy-2,3,4,5-tetrahydrodipicolinate + NADPH + H(+). The protein operates within amino-acid biosynthesis; L-lysine biosynthesis via DAP pathway; (S)-tetrahydrodipicolinate from L-aspartate: step 4/4. In terms of biological role, catalyzes the conversion of 4-hydroxy-tetrahydrodipicolinate (HTPA) to tetrahydrodipicolinate. The protein is 4-hydroxy-tetrahydrodipicolinate reductase of Janthinobacterium sp. (strain Marseille) (Minibacterium massiliensis).